We begin with the raw amino-acid sequence, 207 residues long: Uracil phosphoribosyltransferase (207 aa).

5-phospho-alpha-D-ribose 1-diphosphate contacts are provided by residues arginine 77, arginine 102, and aspartate 129–serine 137. Uracil is bound by residues isoleucine 192 and glycine 197–alanine 199. Aspartate 198 is a binding site for 5-phospho-alpha-D-ribose 1-diphosphate.

This sequence belongs to the UPRTase family. The cofactor is Mg(2+).

The enzyme catalyses UMP + diphosphate = 5-phospho-alpha-D-ribose 1-diphosphate + uracil. It participates in pyrimidine metabolism; UMP biosynthesis via salvage pathway; UMP from uracil: step 1/1. Its activity is regulated as follows. Allosterically activated by GTP. In terms of biological role, catalyzes the conversion of uracil and 5-phospho-alpha-D-ribose 1-diphosphate (PRPP) to UMP and diphosphate. The chain is Uracil phosphoribosyltransferase from Nocardia farcinica (strain IFM 10152).